Consider the following 729-residue polypeptide: Isocitrate dehydrogenase [NADP] (729 aa).

Asparagine 83 and serine 85 together coordinate NADP(+). D-threo-isocitrate is bound by residues serine 121, asparagine 124, arginine 128, arginine 134, and lysine 244. Asparagine 124 is an NADP(+) binding site. A Mg(2+)-binding site is contributed by aspartate 337. 2 residues coordinate D-threo-isocitrate: tyrosine 407 and arginine 534. The Mg(2+) site is built by aspartate 535 and aspartate 539. Residues serine 572, histidine 576, arginine 587, aspartate 589, and arginine 636 each contribute to the NADP(+) site.

Belongs to the monomeric-type IDH family. Monomer. The cofactor is Mg(2+). It depends on Mn(2+) as a cofactor.

It catalyses the reaction D-threo-isocitrate + NADP(+) = 2-oxoglutarate + CO2 + NADPH. Functionally, catalyzes the oxidative decarboxylation of isocitrate to 2-oxoglutarate and carbon dioxide with the concomitant reduction of NADP(+). This is Isocitrate dehydrogenase [NADP] from Corynebacterium efficiens (strain DSM 44549 / YS-314 / AJ 12310 / JCM 11189 / NBRC 100395).